Here is a 428-residue protein sequence, read N- to C-terminus: Tryptophan synthase beta chain (428 aa).

Residue lysine 100 is modified to N6-(pyridoxal phosphate)lysine.

Belongs to the TrpB family. As to quaternary structure, tetramer of two alpha and two beta chains. Pyridoxal 5'-phosphate serves as cofactor.

It catalyses the reaction (1S,2R)-1-C-(indol-3-yl)glycerol 3-phosphate + L-serine = D-glyceraldehyde 3-phosphate + L-tryptophan + H2O. Its pathway is amino-acid biosynthesis; L-tryptophan biosynthesis; L-tryptophan from chorismate: step 5/5. The beta subunit is responsible for the synthesis of L-tryptophan from indole and L-serine. This is Tryptophan synthase beta chain from Streptomyces avermitilis (strain ATCC 31267 / DSM 46492 / JCM 5070 / NBRC 14893 / NCIMB 12804 / NRRL 8165 / MA-4680).